A 601-amino-acid polypeptide reads, in one-letter code: Elongation factor 4 (601 aa).

Residues Ala6–Lys188 form the tr-type G domain. Residues Asp18–Thr23 and Asn135–Asp138 contribute to the GTP site.

The protein belongs to the TRAFAC class translation factor GTPase superfamily. Classic translation factor GTPase family. LepA subfamily.

Its subcellular location is the cell inner membrane. It catalyses the reaction GTP + H2O = GDP + phosphate + H(+). Its function is as follows. Required for accurate and efficient protein synthesis under certain stress conditions. May act as a fidelity factor of the translation reaction, by catalyzing a one-codon backward translocation of tRNAs on improperly translocated ribosomes. Back-translocation proceeds from a post-translocation (POST) complex to a pre-translocation (PRE) complex, thus giving elongation factor G a second chance to translocate the tRNAs correctly. Binds to ribosomes in a GTP-dependent manner. This chain is Elongation factor 4, found in Anaeromyxobacter sp. (strain Fw109-5).